The sequence spans 144 residues: MLNIEQIKEIIPHRYPFLLVDKILEVDEGKRAVGIKNVSANEEFFNGHFPDYAVMPGVLIVEALAQVGAVAVLKKEENRGRLAFFAGIDNCRFKKQVRPGDQLRLEVEMTRVRGPIGKGKAIATVDGEVACEAEITFAIGDKKE.

The active site involves H48.

The protein belongs to the thioester dehydratase family. FabZ subfamily.

Its subcellular location is the cytoplasm. The enzyme catalyses a (3R)-hydroxyacyl-[ACP] = a (2E)-enoyl-[ACP] + H2O. Involved in unsaturated fatty acids biosynthesis. Catalyzes the dehydration of short chain beta-hydroxyacyl-ACPs and long chain saturated and unsaturated beta-hydroxyacyl-ACPs. The protein is 3-hydroxyacyl-[acyl-carrier-protein] dehydratase FabZ of Bacillus thuringiensis (strain Al Hakam).